The sequence spans 210 residues: Claudin-4 (210 aa).

At 1–7 (MASMGLQ) the chain is on the cytoplasmic side. The interaction with EPHA2 stretch occupies residues 1–103 (MASMGLQVMG…GVLLSVVGGK (103 aa)). A helical membrane pass occupies residues 8–28 (VMGIALAVLGWLGAILSCALP). The Extracellular segment spans residues 29–81 (MWRVTAFIGSNIVTSQTIWEGLWMNCVVQSTGQMQCKVYDSLLALPQDLQAAR). Cysteines 54 and 64 form a disulfide. A helical membrane pass occupies residues 82-102 (ALMVVSIILAALGVLLSVVGG). At 103-117 (KCTNCVEDESAKAKT) the chain is on the cytoplasmic side. A helical membrane pass occupies residues 118–138 (MIVAGVVFLLAGLLVMVPASW). Residues 139-160 (TANNIIRDFYNPLVVSGQKREM) lie on the Extracellular side of the membrane. A helical transmembrane segment spans residues 161–181 (GASLYVGWAASGLLLLGGALL). Residues 182 to 210 (CCNCPPRADKPYSAKYSAAARSAPASNYV) are Cytoplasmic-facing. Y209 carries the phosphotyrosine modification. The segment at 209–210 (YV) is interactions with TJP1, TJP2 and TJP3.

Belongs to the claudin family. As to quaternary structure, can form heteropolymeric strands with other claudins. Interacts with CLDN8. Interacts with CLDN1. Directly interacts with TJP1/ZO-1. Interacts with TJP2/ZO-2 and TJP3/ZO-3. Interacts with EPHA2; phosphorylates CLDN4 and may regulate tight junctions. Phosphorylated. Phosphorylation by EPHA2 is stimulated by EFNA1 and alters interaction with TJP1.

The protein resides in the cell junction. The protein localises to the tight junction. Its subcellular location is the cell membrane. The catalysed reaction is chloride(in) = chloride(out). It catalyses the reaction bromide(in) = bromide(out). The enzyme catalyses iodide(out) = iodide(in). It carries out the reaction fluoride(in) = fluoride(out). Its function is as follows. Can associate with other claudins to regulate tight junction structural and functional strand dynamics. May coassemble with CLDN8 into tight junction strands containing anion-selective channels that convey paracellular chloride permeability in renal collecting ducts. May integrate into CLDN3 strands to modulate localized tight junction barrier properties. May disrupt strand assembly of channel-forming CLDN2 and CLDN15 and inhibit cation conductance. Cannot form tight junction strands on its own. This is Claudin-4 (CLDN4) from Canis lupus familiaris (Dog).